The primary structure comprises 178 residues: CDP-archaeol synthase (178 aa).

A run of 5 helical transmembrane segments spans residues 3–23, 55–75, 91–111, 125–145, and 149–169; these read IIYL…ANAT, TFFG…IFNL, GIVG…GSFI, ILDQ…FAPV, and MGIF…IIAY.

This sequence belongs to the CDP-archaeol synthase family. It depends on Mg(2+) as a cofactor.

The protein localises to the cell membrane. It carries out the reaction 2,3-bis-O-(geranylgeranyl)-sn-glycerol 1-phosphate + CTP + H(+) = CDP-2,3-bis-O-(geranylgeranyl)-sn-glycerol + diphosphate. The protein operates within membrane lipid metabolism; glycerophospholipid metabolism. Functionally, catalyzes the formation of CDP-2,3-bis-(O-geranylgeranyl)-sn-glycerol (CDP-archaeol) from 2,3-bis-(O-geranylgeranyl)-sn-glycerol 1-phosphate (DGGGP) and CTP. This reaction is the third ether-bond-formation step in the biosynthesis of archaeal membrane lipids. This Methanococcus aeolicus (strain ATCC BAA-1280 / DSM 17508 / OCM 812 / Nankai-3) protein is CDP-archaeol synthase.